The primary structure comprises 478 residues: JmjC domain-containing histone demethylation protein 1 (478 aa).

The segment at Val6–His70 adopts a PHD-type zinc-finger fold. The JmjC domain occupies Ser242–His401. Residue Thr294 coordinates substrate. Residues His297 and Asp299 each contribute to the Fe cation site. Residue Lys314 coordinates substrate. His369 contacts Fe cation.

This sequence belongs to the JHDM1 histone demethylase family. The cofactor is Fe(2+).

The protein localises to the nucleus. It catalyses the reaction N(6),N(6)-dimethyl-L-lysyl(36)-[histone H3] + 2 2-oxoglutarate + 2 O2 = L-lysyl(36)-[histone H3] + 2 formaldehyde + 2 succinate + 2 CO2. Histone demethylase that specifically demethylates 'Lys-36' of histone H3, thereby playing a central role in histone code. The chain is JmjC domain-containing histone demethylation protein 1 (JHD1) from Kluyveromyces lactis (strain ATCC 8585 / CBS 2359 / DSM 70799 / NBRC 1267 / NRRL Y-1140 / WM37) (Yeast).